Consider the following 190-residue polypeptide: Negative regulator YfiR (190 aa).

GMP is bound at residue Arg60. 2 disulfides stabilise this stretch: Cys71/Cys110 and Cys145/Cys152. The GMP site is built by Arg175 and His177.

Homodimer. Interacts with TpbB/YfiN. Interacts with YfiB. The YfiB-YfiR complex is a 2:2 heterotetramer. Post-translationally, cys-71 and Cys-110 form a disulfide bond in the oxidized form but maintain their free form in the non-oxidized YfiR structure. The Cys-145-Cys-152 disulfide bond is well formed in both structures. The Cys145-Cys152 disulfide bond, but not Cys-71-Cys-110, plays an important role in maintaining the correct folding of the protein.

The protein localises to the periplasm. TpbB/YfiN repression is released through an YfiB-dependent sequestration of YfiR to the outer membrane. Binds vitamin B6 (VB6) or L-Trp at the periphery of the dimer, and both VB6 and L-Trp are able to reduce biofilm formation induced by YfiB L43P mutant. However, VB6 or L-Trp alone may have little effects in interrupting the YfiB-YfiR interaction. GMP enhances the binding affinity between YfiB and YfiR. Negatively regulates the activity of the diguanylate cyclase TpbB/YfiN, leading to decreased c-di-GMP production. Inhibits TpbB/YfiN allosterically, through a hydrophobic interaction between the C-terminus of YfiR and a conserved region of the periplasmic PAS domain of TpbB/YfiN. Under reducing conditions, may also act as an YfiB-independent sensing device that is able to activate TpbB/YfiN in response to the redox status of the periplasm. Its function is as follows. Part of the YfiB-TpbB-YfiR (or yfiBNR) system, encoding a tripartite signaling module that modulates intracellular c-di-GMP levels. The system is a key regulator of the small colony variant (SCV) phenotype, and plays an important role in biofilm formation and in vivo persistence. The c-di-GMP produced by TpbB/YfiN stimulates the production of the Pel and Psl exopolysaccharides, which promotes surface attachment, generates an SCV phenotype and confers resistance against phagocytosis. This is Negative regulator YfiR from Pseudomonas aeruginosa (strain ATCC 15692 / DSM 22644 / CIP 104116 / JCM 14847 / LMG 12228 / 1C / PRS 101 / PAO1).